We begin with the raw amino-acid sequence, 253 residues long: uncharacterized protein (253 aa).

7-14 (GKGGVGKT) provides a ligand contact to ATP.

To M.jannaschii MJ0084 and MJ0823.

This is an uncharacterized protein from Methanocaldococcus jannaschii (strain ATCC 43067 / DSM 2661 / JAL-1 / JCM 10045 / NBRC 100440) (Methanococcus jannaschii).